A 392-amino-acid chain; its full sequence is Glycerophosphodiester phosphodiesterase GDPD5 (392 aa).

The signal sequence occupies residues 1 to 21 (MILTRCLPLIWLSLLTVCAAG). In terms of domain architecture, GP-PDE spans 44–362 (PYNIAHRGSN…DFTGSLHNFQ (319 aa)). Asn120, Asn239, Asn260, and Asn329 each carry an N-linked (GlcNAc...) asparagine glycan.

This sequence belongs to the glycerophosphoryl diester phosphodiesterase family. As to expression, expressed in roots, rosette and cauline leaves, stems, flowers and siliques.

Its subcellular location is the secreted. The protein localises to the cell wall. It is found in the vacuole. It carries out the reaction a sn-glycero-3-phosphodiester + H2O = an alcohol + sn-glycerol 3-phosphate + H(+). The chain is Glycerophosphodiester phosphodiesterase GDPD5 from Arabidopsis thaliana (Mouse-ear cress).